A 299-amino-acid chain; its full sequence is MDLETRIKAYRFVAYSAVAFSVVAVISVCVTLPMVYNYVHHVKRTMHNEITFCKGSAKDIWNEVHALKSLPNSNRTARQAYNDAAVTGGGAQSGSCESCCLPGPPGPAGTPGKPGRPGKPGAPGLPGNPGRPPQQPCEPITPPPCKPCPQGPPGPPGPPGPPGDSGEPGSPGLPGQDAAPGEPGPKGPPGPPGAPGAPGTPGEPGVPAQSEPLIPGEPGPPGEAGPQGPPGSPGQPGADGSPGQPGPKGPNGPDGQPGADGNPGAPGPAGPPGSPGERGICPKYCAIDGGVFFEDGTRR.

Positions 105–282 (PGPAGTPGKP…GSPGERGICP (178 aa)) are disordered. Residues 129–162 (PGRPPQQPCEPITPPPCKPCPQGPPGPPGPPGPP) are compositionally biased toward pro residues. A compositionally biased stretch (low complexity) spans 164 to 181 (DSGEPGSPGLPGQDAAPG). Pro residues-rich tracts occupy residues 182–195 (EPGP…PGAP) and 215–233 (PGEP…PGSP). The tract at residues 216–278 (GEPGPPGEAG…AGPPGSPGER (63 aa)) is triple-helical region. Residues 251 to 263 (NGPDGQPGADGNP) show a composition bias toward low complexity. Positions 265 to 274 (APGPAGPPGS) are enriched in pro residues.

Belongs to the cuticular collagen family. As to quaternary structure, collagen polypeptide chains are complexed within the cuticle by disulfide bonds and other types of covalent cross-links.

Its function is as follows. Nematode cuticles are composed largely of collagen-like proteins. The cuticle functions both as an exoskeleton and as a barrier to protect the worm from its environment. This Caenorhabditis elegans protein is Cuticle collagen 34 (col-34).